The chain runs to 549 residues: Glucose-6-phosphate isomerase (549 aa).

Catalysis depends on glutamate 355, which acts as the Proton donor. Residues histidine 387 and lysine 515 contribute to the active site.

This sequence belongs to the GPI family.

It localises to the cytoplasm. It catalyses the reaction alpha-D-glucose 6-phosphate = beta-D-fructose 6-phosphate. The protein operates within carbohydrate biosynthesis; gluconeogenesis. It functions in the pathway carbohydrate degradation; glycolysis; D-glyceraldehyde 3-phosphate and glycerone phosphate from D-glucose: step 2/4. In terms of biological role, catalyzes the reversible isomerization of glucose-6-phosphate to fructose-6-phosphate. This is Glucose-6-phosphate isomerase from Mannheimia succiniciproducens (strain KCTC 0769BP / MBEL55E).